Consider the following 304-residue polypeptide: Porphobilinogen deaminase (304 aa).

Cys-241 is subject to S-(dipyrrolylmethanemethyl)cysteine.

It belongs to the HMBS family. Monomer. The cofactor is dipyrromethane.

The enzyme catalyses 4 porphobilinogen + H2O = hydroxymethylbilane + 4 NH4(+). The protein operates within porphyrin-containing compound metabolism; protoporphyrin-IX biosynthesis; coproporphyrinogen-III from 5-aminolevulinate: step 2/4. Functionally, tetrapolymerization of the monopyrrole PBG into the hydroxymethylbilane pre-uroporphyrinogen in several discrete steps. This Ruthia magnifica subsp. Calyptogena magnifica protein is Porphobilinogen deaminase.